The chain runs to 159 residues: Small ribosomal subunit protein uS9 (159 aa).

This sequence belongs to the universal ribosomal protein uS9 family.

The polypeptide is Small ribosomal subunit protein uS9 (Rickettsia peacockii (strain Rustic)).